We begin with the raw amino-acid sequence, 230 residues long: Large ribosomal subunit protein uL1 (230 aa).

This sequence belongs to the universal ribosomal protein uL1 family. In terms of assembly, part of the 50S ribosomal subunit.

In terms of biological role, binds directly to 23S rRNA. The L1 stalk is quite mobile in the ribosome, and is involved in E site tRNA release. Functionally, protein L1 is also a translational repressor protein, it controls the translation of the L11 operon by binding to its mRNA. In Limosilactobacillus fermentum (strain NBRC 3956 / LMG 18251) (Lactobacillus fermentum), this protein is Large ribosomal subunit protein uL1.